We begin with the raw amino-acid sequence, 571 residues long: Acetolactate synthase large subunit (571 aa).

Thiamine diphosphate is bound at residue Glu-51. Residues Arg-153, 261–282 (HGTY…IGVR), and 304–323 (DIDP…IVGD) contribute to the FAD site. The interval 394 to 474 (QHQMFTALYY…VLILNLNNSS (81 aa)) is thiamine pyrophosphate binding. Mg(2+)-binding residues include Asp-445 and Asn-472.

It belongs to the TPP enzyme family. As to quaternary structure, dimer of large and small chains. Mg(2+) is required as a cofactor. The cofactor is thiamine diphosphate.

The enzyme catalyses 2 pyruvate + H(+) = (2S)-2-acetolactate + CO2. Its pathway is amino-acid biosynthesis; L-isoleucine biosynthesis; L-isoleucine from 2-oxobutanoate: step 1/4. It participates in amino-acid biosynthesis; L-valine biosynthesis; L-valine from pyruvate: step 1/4. The protein is Acetolactate synthase large subunit (ilvI) of Buchnera aphidicola subsp. Acyrthosiphon pisum (strain APS) (Acyrthosiphon pisum symbiotic bacterium).